We begin with the raw amino-acid sequence, 130 residues long: Small ribosomal subunit protein uS8 (130 aa).

Belongs to the universal ribosomal protein uS8 family. In terms of assembly, part of the 30S ribosomal subunit. Contacts proteins S5 and S12.

One of the primary rRNA binding proteins, it binds directly to 16S rRNA central domain where it helps coordinate assembly of the platform of the 30S subunit. The chain is Small ribosomal subunit protein uS8 from Opitutus terrae (strain DSM 11246 / JCM 15787 / PB90-1).